The primary structure comprises 338 residues: Biotin synthase (338 aa).

Positions asparagine 46–alanine 270 constitute a Radical SAM core domain. Cysteine 61, cysteine 65, and cysteine 68 together coordinate [4Fe-4S] cluster. 4 residues coordinate [2Fe-2S] cluster: cysteine 105, cysteine 136, cysteine 196, and arginine 274.

Belongs to the radical SAM superfamily. Biotin synthase family. As to quaternary structure, homodimer. [4Fe-4S] cluster is required as a cofactor. Requires [2Fe-2S] cluster as cofactor.

The catalysed reaction is (4R,5S)-dethiobiotin + (sulfur carrier)-SH + 2 reduced [2Fe-2S]-[ferredoxin] + 2 S-adenosyl-L-methionine = (sulfur carrier)-H + biotin + 2 5'-deoxyadenosine + 2 L-methionine + 2 oxidized [2Fe-2S]-[ferredoxin]. It participates in cofactor biosynthesis; biotin biosynthesis; biotin from 7,8-diaminononanoate: step 2/2. Catalyzes the conversion of dethiobiotin (DTB) to biotin by the insertion of a sulfur atom into dethiobiotin via a radical-based mechanism. This Rhizorhabdus wittichii (strain DSM 6014 / CCUG 31198 / JCM 15750 / NBRC 105917 / EY 4224 / RW1) (Sphingomonas wittichii) protein is Biotin synthase.